Reading from the N-terminus, the 154-residue chain is Large ribosomal subunit protein uL13 (154 aa).

It belongs to the universal ribosomal protein uL13 family. As to quaternary structure, part of the 50S ribosomal subunit.

Its function is as follows. This protein is one of the early assembly proteins of the 50S ribosomal subunit, although it is not seen to bind rRNA by itself. It is important during the early stages of 50S assembly. This is Large ribosomal subunit protein uL13 from Bartonella quintana (strain Toulouse) (Rochalimaea quintana).